Reading from the N-terminus, the 204-residue chain is MNNELKLGKRQKQILDFIKQSCKEKGYPPSVREIGQAVGLKSSSTVHTHLVRLEEKGLIRRDPAKPRAIIPLDDEPLLQSEALSVPVIGNVAAGSPILAEQNIDNYLSIPVDFLGSGNHFILKVKGDSMIEAGILDGDYLIVREQADASNGEIVVALLDNEATVKRFYRRDDYVELRPENALMDPITVNNVQVAGKVAGLLRRI.

The segment at residues 31–51 is a DNA-binding region (H-T-H motif); that stretch reads VREIGQAVGLKSSSTVHTHLV. Catalysis depends on for autocatalytic cleavage activity residues S128 and K165.

This sequence belongs to the peptidase S24 family. Homodimer.

It catalyses the reaction Hydrolysis of Ala-|-Gly bond in repressor LexA.. Represses a number of genes involved in the response to DNA damage (SOS response), including recA and lexA. In the presence of single-stranded DNA, RecA interacts with LexA causing an autocatalytic cleavage which disrupts the DNA-binding part of LexA, leading to derepression of the SOS regulon and eventually DNA repair. This chain is LexA repressor, found in Syntrophomonas wolfei subsp. wolfei (strain DSM 2245B / Goettingen).